Reading from the N-terminus, the 340-residue chain is Protein-glutamate methylesterase/protein-glutamine glutaminase 1 (340 aa).

In terms of domain architecture, Response regulatory spans 5 to 122; that stretch reads KLFIVDDSAL…KVVSELKEKI (118 aa). Aspartate 56 bears the 4-aspartylphosphate mark. Residues 148–340 enclose the CheB-type methylesterase domain; that stretch reads GKNGRQLVVI…AIAEEIAANI (193 aa). Residues serine 160, histidine 187, and aspartate 285 contribute to the active site.

It belongs to the CheB family. Post-translationally, phosphorylated by CheA. Phosphorylation of the N-terminal regulatory domain activates the methylesterase activity.

The protein resides in the cytoplasm. It carries out the reaction [protein]-L-glutamate 5-O-methyl ester + H2O = L-glutamyl-[protein] + methanol + H(+). The catalysed reaction is L-glutaminyl-[protein] + H2O = L-glutamyl-[protein] + NH4(+). Involved in chemotaxis. Part of a chemotaxis signal transduction system that modulates chemotaxis in response to various stimuli. Catalyzes the demethylation of specific methylglutamate residues introduced into the chemoreceptors (methyl-accepting chemotaxis proteins or MCP) by CheR. Also mediates the irreversible deamidation of specific glutamine residues to glutamic acid. This Carboxydothermus hydrogenoformans (strain ATCC BAA-161 / DSM 6008 / Z-2901) protein is Protein-glutamate methylesterase/protein-glutamine glutaminase 1.